A 238-amino-acid polypeptide reads, in one-letter code: Thrombin-like enzyme gyroxin B2.1 (238 aa).

The Peptidase S1 domain maps to 1–229 (VIGGDECNIN…HLDWIQNIIA (229 aa)). 6 disulfide bridges follow: cysteine 7–cysteine 141, cysteine 28–cysteine 44, cysteine 78–cysteine 236, cysteine 120–cysteine 190, cysteine 152–cysteine 169, and cysteine 180–cysteine 205. Histidine 43 acts as the Charge relay system in catalysis. Asparagine 81 is a glycosylation site (N-linked (GlcNAc...) asparagine). The active-site Charge relay system is aspartate 88. Serine 184 functions as the Charge relay system in the catalytic mechanism.

This sequence belongs to the peptidase S1 family. Snake venom subfamily. As to quaternary structure, monomer. Expressed by the venom gland.

It is found in the secreted. In terms of biological role, thrombin-like snake venom serine protease. Displays a specificity similar to trypsin. Releases only fibrinopeptide A in the conversion of fibrinogen (FGA) to fibrin. Shows coagulant, esterase and amidase activities. Reversibly increases the permeability of the blood brain barrier (BBB) in mice. Induces the barrel rotation syndrome in mice, which is manifested by gyroxin-like, rapid rolling motions. This syndrome may be due to its effect on BBB permeability, and certainly also to other actions affecting endogenous substrates present in the endothelium, nervous tissues or blood. The chain is Thrombin-like enzyme gyroxin B2.1 from Crotalus durissus terrificus (South American rattlesnake).